The following is a 524-amino-acid chain: GMP synthase [glutamine-hydrolyzing] (524 aa).

Residues 9 to 207 enclose the Glutamine amidotransferase type-1 domain; the sequence is RILILDFGSQ…VIHICQCIPN (199 aa). The active-site Nucleophile is the cysteine 86. Active-site residues include histidine 181 and glutamate 183. Residues 208-399 form the GMPS ATP-PPase domain; that stretch reads WTTKHIIEDS…LGLPADLIYR (192 aa). 235 to 241 provides a ligand contact to ATP; it reads SGGVDSA.

As to quaternary structure, homodimer.

The enzyme catalyses XMP + L-glutamine + ATP + H2O = GMP + L-glutamate + AMP + diphosphate + 2 H(+). It participates in purine metabolism; GMP biosynthesis; GMP from XMP (L-Gln route): step 1/1. Its function is as follows. Catalyzes the synthesis of GMP from XMP. This Coxiella burnetii (strain CbuK_Q154) (Coxiella burnetii (strain Q154)) protein is GMP synthase [glutamine-hydrolyzing].